We begin with the raw amino-acid sequence, 334 residues long: Fructose-1,6-bisphosphatase class 1 (334 aa).

The Mg(2+) site is built by Glu90, Asp113, Leu115, and Asp116. Substrate contacts are provided by residues 116–119 (DGSS), Asn209, Tyr242, and Lys272. A Mg(2+)-binding site is contributed by Glu278.

The protein belongs to the FBPase class 1 family. As to quaternary structure, homotetramer. Mg(2+) is required as a cofactor.

It localises to the cytoplasm. It catalyses the reaction beta-D-fructose 1,6-bisphosphate + H2O = beta-D-fructose 6-phosphate + phosphate. The protein operates within carbohydrate biosynthesis; gluconeogenesis. This chain is Fructose-1,6-bisphosphatase class 1, found in Actinobacillus pleuropneumoniae serotype 5b (strain L20).